A 156-amino-acid polypeptide reads, in one-letter code: Small ribosomal subunit protein uS7 (156 aa).

Belongs to the universal ribosomal protein uS7 family. Part of the 30S ribosomal subunit. Contacts proteins S9 and S11.

One of the primary rRNA binding proteins, it binds directly to 16S rRNA where it nucleates assembly of the head domain of the 30S subunit. Is located at the subunit interface close to the decoding center, probably blocks exit of the E-site tRNA. This Pasteurella multocida (strain Pm70) protein is Small ribosomal subunit protein uS7.